We begin with the raw amino-acid sequence, 264 residues long: Phosphoribosylaminoimidazole-succinocarboxamide synthase 1 (264 aa).

This sequence belongs to the SAICAR synthetase family.

The enzyme catalyses 5-amino-1-(5-phospho-D-ribosyl)imidazole-4-carboxylate + L-aspartate + ATP = (2S)-2-[5-amino-1-(5-phospho-beta-D-ribosyl)imidazole-4-carboxamido]succinate + ADP + phosphate + 2 H(+). Its pathway is purine metabolism; IMP biosynthesis via de novo pathway; 5-amino-1-(5-phospho-D-ribosyl)imidazole-4-carboxamide from 5-amino-1-(5-phospho-D-ribosyl)imidazole-4-carboxylate: step 1/2. The protein is Phosphoribosylaminoimidazole-succinocarboxamide synthase 1 (purC1) of Mesorhizobium japonicum (strain LMG 29417 / CECT 9101 / MAFF 303099) (Mesorhizobium loti (strain MAFF 303099)).